Here is a 511-residue protein sequence, read N- to C-terminus: Histidine ammonia-lyase (511 aa).

The segment at residues 143-145 is a cross-link (5-imidazolinone (Ala-Gly)); sequence ASG. Serine 144 is subject to 2,3-didehydroalanine (Ser).

Belongs to the PAL/histidase family. Contains an active site 4-methylidene-imidazol-5-one (MIO), which is formed autocatalytically by cyclization and dehydration of residues Ala-Ser-Gly.

Its subcellular location is the cytoplasm. The enzyme catalyses L-histidine = trans-urocanate + NH4(+). It functions in the pathway amino-acid degradation; L-histidine degradation into L-glutamate; N-formimidoyl-L-glutamate from L-histidine: step 1/3. This is Histidine ammonia-lyase from Idiomarina loihiensis (strain ATCC BAA-735 / DSM 15497 / L2-TR).